Consider the following 69-residue polypeptide: MAKATKKAEAKTVTIEQIGSPIRRPDVQQRTLIGLGLNKMHRRRTLEDTPSVRGMIRAVQHLVRIVDEK.

Belongs to the universal ribosomal protein uL30 family. As to quaternary structure, part of the 50S ribosomal subunit.

The chain is Large ribosomal subunit protein uL30 from Rhizobium etli (strain ATCC 51251 / DSM 11541 / JCM 21823 / NBRC 15573 / CFN 42).